The primary structure comprises 405 residues: Eukaryotic translation initiation factor 5 (405 aa).

27–34 (GRGNGIKT) lines the GTP pocket. A disordered region spans residues 143–202 (NPPDSVSGSKKKKKAATASANVRGGGLSISDIAQGKSQNAPSDGTGSSTPQHHDEDEDEL). 2 positions are modified to phosphoserine: serine 170 and serine 172. The segment covering 177–192 (GKSQNAPSDGTGSSTP) has biased composition (polar residues). Threonine 191 is modified (phosphothreonine). Serine 228 carries the phosphoserine modification. In terms of domain architecture, W2 spans 241–402 (VNSELTQLDE…ETAESDDDEE (162 aa)). At threonine 317 the chain carries Phosphothreonine. At serine 397 the chain carries Phosphoserine.

The protein belongs to the eIF-2-beta/eIF-5 family. In terms of assembly, monomer. The factors eIF-1, eIF-2, eIF-3, TIF5/eIF-5 and methionyl-tRNAi form a multifactor complex (MFC) that may bind to the 40S ribosome. TIF32, NIP1 and TIF5/eIF-5 comprise a minimal 40S-ribosome-binding unit. Interacts with NIP1. Interacts with SUI3.

Its function is as follows. Catalyzes the hydrolysis of GTP bound to the 40S ribosomal initiation complex (40S.mRNA.Met-tRNA[F].eIF-2.GTP) with the subsequent joining of a 60S ribosomal subunit resulting in the release of eIF-2 and the guanine nucleotide. The subsequent joining of a 60S ribosomal subunit results in the formation of a functional 80S initiation complex (80S.mRNA.Met-tRNA[F]). eIF-5 is essential for cell viability. This chain is Eukaryotic translation initiation factor 5 (TIF5), found in Saccharomyces cerevisiae (strain ATCC 204508 / S288c) (Baker's yeast).